We begin with the raw amino-acid sequence, 206 residues long: Thymidylate kinase (206 aa).

Residue 11–18 (GIDGAGKT) coordinates ATP.

This sequence belongs to the thymidylate kinase family.

It catalyses the reaction dTMP + ATP = dTDP + ADP. Phosphorylation of dTMP to form dTDP in both de novo and salvage pathways of dTTP synthesis. The chain is Thymidylate kinase from Burkholderia thailandensis (strain ATCC 700388 / DSM 13276 / CCUG 48851 / CIP 106301 / E264).